Consider the following 833-residue polypeptide: RNA-binding protein 5-A (833 aa).

Residues 1–87 (MGSDKRVSRS…GYHSDGDYMD (87 aa)) are disordered. The region spanning 102–182 (KTIMLRGLPI…KTIAMHYSNP (81 aa)) is the RRM 1 domain. A RanBP2-type zinc finger spans residues 185 to 214 (KFEDWLCNKCGLYNFRRRLKCFRCGAAKAE). The 85-residue stretch at 241-325 (SAIILRNIGP…KTIGVDFAKS (85 aa)) folds into the RRM 2 domain. The segment covering 396-428 (TGAAEQGTAPQAESSSPVPATTSAVVCQSPQMY) has biased composition (polar residues). 2 disordered regions span residues 396-458 (TGAA…EEAA) and 523-559 (AADG…TAQQ). Low complexity predominate over residues 429–458 (QQPGSPTQSSTSTVAASATPASGTSAEEAA). Residues 667–692 (LACLLCRRQFPNKDALTRHQQLSDLH) form a C2H2-type zinc finger. Residues 761 to 807 (NSNIGNKMLQAMGWKEGSGLGRKSQGITAPIQAQVRMRGAGLGAKGS) form the G-patch domain.

It belongs to the RBM5/RBM10 family. Component of the spliceosome A complex (also known as the prespliceosome). Appears to dissociate from the spliceosome upon formation of the spliceosome B complex (also known as the precatalytic spliceosome), in which the heterotrimeric U4/U6.U5 snRNPs are bound.

It is found in the nucleus. Component of the spliceosome A complex. Regulates alternative splicing of a number of mRNAs. May modulate splice site pairing after recruitment of the U1 and U2 snRNPs to the 5' and 3' splice sites of the intron. In Xenopus laevis (African clawed frog), this protein is RNA-binding protein 5-A (rbm5-a).